Here is a 429-residue protein sequence, read N- to C-terminus: Adenylosuccinate synthetase (429 aa).

GTP-binding positions include 12-18 and 40-42; these read GDEGKGK and GHT. The Proton acceptor role is filled by aspartate 13. Residues aspartate 13 and glycine 40 each coordinate Mg(2+). Residues 13–16, 38–41, threonine 129, arginine 143, glutamine 223, threonine 238, and arginine 302 contribute to the IMP site; these read DEGK and NAGH. Histidine 41 (proton donor) is an active-site residue. Residue 298-304 coordinates substrate; sequence VVTGRKR. Residues arginine 304, 330–332, and 412–414 contribute to the GTP site; these read KLD and STS.

Belongs to the adenylosuccinate synthetase family. Homodimer. Requires Mg(2+) as cofactor.

The protein localises to the cytoplasm. The catalysed reaction is IMP + L-aspartate + GTP = N(6)-(1,2-dicarboxyethyl)-AMP + GDP + phosphate + 2 H(+). It participates in purine metabolism; AMP biosynthesis via de novo pathway; AMP from IMP: step 1/2. In terms of biological role, plays an important role in the de novo pathway of purine nucleotide biosynthesis. Catalyzes the first committed step in the biosynthesis of AMP from IMP. The polypeptide is Adenylosuccinate synthetase (Bartonella bacilliformis (strain ATCC 35685 / KC583 / Herrer 020/F12,63)).